We begin with the raw amino-acid sequence, 140 residues long: 3-hydroxyacyl-[acyl-carrier-protein] dehydratase FabZ (140 aa).

Residue H47 is part of the active site.

Belongs to the thioester dehydratase family. FabZ subfamily.

It is found in the cytoplasm. It carries out the reaction a (3R)-hydroxyacyl-[ACP] = a (2E)-enoyl-[ACP] + H2O. In terms of biological role, involved in unsaturated fatty acids biosynthesis. Catalyzes the dehydration of short chain beta-hydroxyacyl-ACPs and long chain saturated and unsaturated beta-hydroxyacyl-ACPs. The protein is 3-hydroxyacyl-[acyl-carrier-protein] dehydratase FabZ of Streptococcus uberis (strain ATCC BAA-854 / 0140J).